The following is a 520-amino-acid chain: Glutamyl-tRNA(Gln) amidotransferase subunit A (520 aa).

Catalysis depends on charge relay system residues lysine 80 and serine 155. Serine 179 functions as the Acyl-ester intermediate in the catalytic mechanism.

It belongs to the amidase family. GatA subfamily. Heterotrimer of A, B and C subunits.

It catalyses the reaction L-glutamyl-tRNA(Gln) + L-glutamine + ATP + H2O = L-glutaminyl-tRNA(Gln) + L-glutamate + ADP + phosphate + H(+). Functionally, allows the formation of correctly charged Gln-tRNA(Gln) through the transamidation of misacylated Glu-tRNA(Gln) in organisms which lack glutaminyl-tRNA synthetase. The reaction takes place in the presence of glutamine and ATP through an activated gamma-phospho-Glu-tRNA(Gln). This chain is Glutamyl-tRNA(Gln) amidotransferase subunit A, found in Renibacterium salmoninarum (strain ATCC 33209 / DSM 20767 / JCM 11484 / NBRC 15589 / NCIMB 2235).